A 741-amino-acid polypeptide reads, in one-letter code: Eukaryotic translation initiation factor 3 subunit B (741 aa).

Polar residues predominate over residues 1–10 (MAPSFDTLSE). The interval 1-22 (MAPSFDTLSEQDLHEEEEEEID) is disordered. Acidic residues predominate over residues 13 to 22 (LHEEEEEEID). The RRM domain maps to 40–126 (TFVVIDGLPV…HTLLVNKLMD (87 aa)). WD repeat units follow at residues 193–230 (AHWT…KQKQ), 232–289 (PHPF…RSFV), 303–344 (QPKK…LLGK), 514–557 (IEKK…EKPE), and 572–610 (LEHY…HTFS). The interval 695-722 (KDAYGLPEDVDDPKKAKDAPAVTSEQGE) is disordered.

It belongs to the eIF-3 subunit B family. As to quaternary structure, component of the eukaryotic translation initiation factor 3 (eIF-3) complex.

It is found in the cytoplasm. RNA-binding component of the eukaryotic translation initiation factor 3 (eIF-3) complex, which is involved in protein synthesis of a specialized repertoire of mRNAs and, together with other initiation factors, stimulates binding of mRNA and methionyl-tRNAi to the 40S ribosome. The eIF-3 complex specifically targets and initiates translation of a subset of mRNAs involved in cell proliferation. This Aspergillus clavatus (strain ATCC 1007 / CBS 513.65 / DSM 816 / NCTC 3887 / NRRL 1 / QM 1276 / 107) protein is Eukaryotic translation initiation factor 3 subunit B (prt1).